Reading from the N-terminus, the 324-residue chain is Adenine deaminase (324 aa).

Positions 8, 10, and 186 each coordinate Zn(2+). Glu189 functions as the Proton donor in the catalytic mechanism. Zn(2+) is bound at residue Asp267. Asp268 contacts substrate.

It belongs to the metallo-dependent hydrolases superfamily. Adenosine and AMP deaminases family. Adenine deaminase type 2 subfamily. The cofactor is Zn(2+).

It catalyses the reaction adenine + H2O + H(+) = hypoxanthine + NH4(+). Catalyzes the hydrolytic deamination of adenine to hypoxanthine. Plays an important role in the purine salvage pathway and in nitrogen catabolism. In Mesorhizobium japonicum (strain LMG 29417 / CECT 9101 / MAFF 303099) (Mesorhizobium loti (strain MAFF 303099)), this protein is Adenine deaminase.